A 129-amino-acid polypeptide reads, in one-letter code: Histone H2A-IV (129 aa).

A disordered region spans residues 1–22 (MSGRGKQGGKARAKAKSRSSRA). Position 2 is an N-acetylserine (S2). S2 carries the phosphoserine modification. K6 is modified (N6-(2-hydroxyisobutyryl)lysine). N6-acetyllysine occurs at positions 6 and 10. Positions 7-19 (QGGKARAKAKSRS) are enriched in basic residues. At K10 the chain carries N6-(2-hydroxyisobutyryl)lysine; alternate. The residue at position 10 (K10) is an N6-lactoyllysine; alternate. K10 is subject to N6-succinyllysine. Glycyl lysine isopeptide (Lys-Gly) (interchain with G-Cter in ubiquitin) cross-links involve residues K14 and K16. At K37 the chain carries N6-(2-hydroxyisobutyryl)lysine; alternate. Residues K75 and K76 each carry the N6-(2-hydroxyisobutyryl)lysine modification. The residue at position 96 (K96) is an N6-(2-hydroxyisobutyryl)lysine; alternate. K96 is modified (N6-succinyllysine). An N6-glutaryllysine; alternate modification is found at K96. At K100 the chain carries N6-glutaryllysine. Q105 carries the N5-methylglutamine modification. K119 is subject to N6-(2-hydroxyisobutyryl)lysine; alternate. N6-glutaryllysine; alternate occurs at positions 119 and 120. A Glycyl lysine isopeptide (Lys-Gly) (interchain with G-Cter in ubiquitin) cross-link involves residue K120.

It belongs to the histone H2A family. As to quaternary structure, the nucleosome is a histone octamer containing two molecules each of H2A, H2B, H3 and H4 assembled in one H3-H4 heterotetramer and two H2A-H2B heterodimers. The octamer wraps approximately 147 bp of DNA. In terms of processing, monoubiquitination of Lys-120 (H2AK119Ub) gives a specific tag for epigenetic transcriptional repression. Following DNA double-strand breaks (DSBs), it is ubiquitinated through 'Lys-63' linkage of ubiquitin moieties, leading to the recruitment of repair proteins to sites of DNA damage. H2AK119Ub and ionizing radiation-induced 'Lys-63'-linked ubiquitination are distinct events. Post-translationally, phosphorylation on Ser-2 is enhanced during mitosis. Phosphorylation on Ser-2 directly represses transcription. Glutamine methylation at Gln-105 (H2AQ104me) by FBL is specifically dedicated to polymerase I. It is present at 35S ribosomal DNA locus and impairs binding of the FACT complex.

The protein localises to the nucleus. It localises to the chromosome. Its function is as follows. Core component of nucleosome. Nucleosomes wrap and compact DNA into chromatin, limiting DNA accessibility to the cellular machineries which require DNA as a template. Histones thereby play a central role in transcription regulation, DNA repair, DNA replication and chromosomal stability. DNA accessibility is regulated via a complex set of post-translational modifications of histones, also called histone code, and nucleosome remodeling. This chain is Histone H2A-IV, found in Gallus gallus (Chicken).